The sequence spans 311 residues: Mediator of RNA polymerase II transcription subunit 27 (311 aa).

S132 carries the phosphoserine modification. K134 carries the post-translational modification N6-methyllysine.

The protein belongs to the Mediator complex subunit 27 family. In terms of assembly, component of the Mediator complex, which is composed of MED1, MED4, MED6, MED7, MED8, MED9, MED10, MED11, MED12, MED13, MED13L, MED14, MED15, MED16, MED17, MED18, MED19, MED20, MED21, MED22, MED23, MED24, MED25, MED26, MED27, MED29, MED30, MED31, CCNC, CDK8 and CDC2L6/CDK11. The MED12, MED13, CCNC and CDK8 subunits form a distinct module termed the CDK8 module. Mediator containing the CDK8 module is less active than Mediator lacking this module in supporting transcriptional activation. Individual preparations of the Mediator complex lacking one or more distinct subunits have been variously termed ARC, CRSP, DRIP, PC2, SMCC and TRAP.

The protein resides in the nucleus. Its function is as follows. Component of the Mediator complex, a coactivator involved in the regulated transcription of nearly all RNA polymerase II-dependent genes. Mediator functions as a bridge to convey information from gene-specific regulatory proteins to the basal RNA polymerase II transcription machinery. Mediator is recruited to promoters by direct interactions with regulatory proteins and serves as a scaffold for the assembly of a functional preinitiation complex with RNA polymerase II and the general transcription factors. This Homo sapiens (Human) protein is Mediator of RNA polymerase II transcription subunit 27 (MED27).